A 131-amino-acid chain; its full sequence is MGVRVMRSRICVIGLLVLMLTQSEAYSFREKSWRTSPYYRQYGGYFRRRDGGDQAPSFTSTGNGEDVSNGLDDDAGIYLSDQAGDDGISPADKRSAMLQQLAQQLKNRPREKGGFTFRFGKRESRRSFGSD.

Residues 1–25 (MGVRVMRSRICVIGLLVLMLTQSEA) form the signal peptide. The propeptide occupies 26 to 94 (YSFREKSWRT…DDGISPADKR (69 aa)). The tract at residues 48-131 (RRDGGDQAPS…RESRRSFGSD (84 aa)) is disordered. Residues 97–106 (MLQQLAQQLK) show a composition bias toward polar residues. Residue Phe-119 is modified to Phenylalanine amide. The segment covering 120 to 131 (GKRESRRSFGSD) has biased composition (basic and acidic residues). A propeptide spanning residues 123–131 (ESRRSFGSD) is cleaved from the precursor.

This sequence belongs to the RFamide neuropeptide family.

The protein resides in the secreted. In terms of biological role, ligand for the G-protein coupled receptor QRFPR. This Branchiostoma floridae (Florida lancelet) protein is QRFP-like peptide.